The following is a 329-amino-acid chain: MTTPGTDHNADQGADSGDKATKAASGAQTEREVLLVAHTGVHENLGLAAEAASRLQKGGINVRVMATADPAPVARHEVLGRFKRFGHTKEAATGVEMVIVLGGDGTFLRAADIAHSADVPVLGINMGHIGFLAEWEQESLQEAVDRVIDRDYRIEDRMTLSITARDMDGRVLGTGWALNECSVENLNRQGVLDTILEVDERPVSSFGCDGVLVSTPTGSTAYAFSAGGPVLWPELDAILVVTSNAHTLFSRPLVVSPNSMVAVETNPSTSPATVVMDGFRQIHMPPGARVEIRRGPQPVRWVRLDSAPFTDRLVHKFRLPVTGWRGPRH.

Positions 1-26 are disordered; sequence MTTPGTDHNADQGADSGDKATKAASG. The Proton acceptor role is filled by D104. Residues 104–105, R109, 179–180, D209, and 220–225 contribute to the NAD(+) site; these read DG, NE, and TAYAFS.

The protein belongs to the NAD kinase family. Requires a divalent metal cation as cofactor.

The protein localises to the cytoplasm. It carries out the reaction NAD(+) + ATP = ADP + NADP(+) + H(+). Its function is as follows. Involved in the regulation of the intracellular balance of NAD and NADP, and is a key enzyme in the biosynthesis of NADP. Catalyzes specifically the phosphorylation on 2'-hydroxyl of the adenosine moiety of NAD to yield NADP. The polypeptide is NAD kinase (Corynebacterium jeikeium (strain K411)).